Consider the following 348-residue polypeptide: GMP reductase (348 aa).

Position 108–131 (108–131 (ADFQKTKDIMALSDELIFICVDIA)) interacts with NADP(+). Residues glycine 181 and glycine 183 each contribute to the K(+) site. Cysteine 186 acts as the Thioimidate intermediate in catalysis. 216 to 239 (IIGDGGCSCAGDVSKAFGGGADFV) serves as a coordination point for NADP(+).

The protein belongs to the IMPDH/GMPR family. GuaC type 1 subfamily. In terms of assembly, homotetramer.

It catalyses the reaction IMP + NH4(+) + NADP(+) = GMP + NADPH + 2 H(+). In terms of biological role, catalyzes the irreversible NADPH-dependent deamination of GMP to IMP. It functions in the conversion of nucleobase, nucleoside and nucleotide derivatives of G to A nucleotides, and in maintaining the intracellular balance of A and G nucleotides. This is GMP reductase from Vibrio parahaemolyticus serotype O3:K6 (strain RIMD 2210633).